Reading from the N-terminus, the 343-residue chain is Protein RecA (343 aa).

The protein belongs to the RecA family.

The protein resides in the cytoplasm. Can catalyze the hydrolysis of ATP in the presence of single-stranded DNA, the ATP-dependent uptake of single-stranded DNA by duplex DNA, and the ATP-dependent hybridization of homologous single-stranded DNAs. It interacts with LexA causing its activation and leading to its autocatalytic cleavage. In Coxiella burnetii (strain RSA 493 / Nine Mile phase I), this protein is Protein RecA.